We begin with the raw amino-acid sequence, 382 residues long: Bifunctional enzyme IspD/IspF (382 aa).

A 2-C-methyl-D-erythritol 4-phosphate cytidylyltransferase region spans residues 1 to 225 (MTGKPSIAAL…AEERMAMISR (225 aa)). A 2-C-methyl-D-erythritol 2,4-cyclodiphosphate synthase region spans residues 225-382 (RTAMGFDVHG…AVATVRVPSI (158 aa)). The a divalent metal cation site is built by Asp231 and His233. Residues 231–233 (DVH) and 257–258 (HS) each bind 4-CDP-2-C-methyl-D-erythritol 2-phosphate. His265 provides a ligand contact to a divalent metal cation. 4-CDP-2-C-methyl-D-erythritol 2-phosphate contacts are provided by residues 279-281 (DIG), 355-358 (TTTE), Phe362, and Arg365.

It in the N-terminal section; belongs to the IspD/TarI cytidylyltransferase family. IspD subfamily. In the C-terminal section; belongs to the IspF family. It depends on a divalent metal cation as a cofactor.

It catalyses the reaction 2-C-methyl-D-erythritol 4-phosphate + CTP + H(+) = 4-CDP-2-C-methyl-D-erythritol + diphosphate. The catalysed reaction is 4-CDP-2-C-methyl-D-erythritol 2-phosphate = 2-C-methyl-D-erythritol 2,4-cyclic diphosphate + CMP. The protein operates within isoprenoid biosynthesis; isopentenyl diphosphate biosynthesis via DXP pathway; isopentenyl diphosphate from 1-deoxy-D-xylulose 5-phosphate: step 2/6. It functions in the pathway isoprenoid biosynthesis; isopentenyl diphosphate biosynthesis via DXP pathway; isopentenyl diphosphate from 1-deoxy-D-xylulose 5-phosphate: step 4/6. In terms of biological role, bifunctional enzyme that catalyzes the formation of 4-diphosphocytidyl-2-C-methyl-D-erythritol from CTP and 2-C-methyl-D-erythritol 4-phosphate (MEP) (IspD), and catalyzes the conversion of 4-diphosphocytidyl-2-C-methyl-D-erythritol 2-phosphate (CDP-ME2P) to 2-C-methyl-D-erythritol 2,4-cyclodiphosphate (ME-CPP) with a corresponding release of cytidine 5-monophosphate (CMP) (IspF). This is Bifunctional enzyme IspD/IspF from Rhizorhabdus wittichii (strain DSM 6014 / CCUG 31198 / JCM 15750 / NBRC 105917 / EY 4224 / RW1) (Sphingomonas wittichii).